We begin with the raw amino-acid sequence, 569 residues long: Urease subunit alpha (569 aa).

The 439-residue stretch at 131–569 (GGMDAHIHYI…LPMAQRYFLF (439 aa)) folds into the Urease domain. Ni(2+)-binding residues include His-136, His-138, and Lys-218. Position 218 is an N6-carboxylysine (Lys-218). His-220 contributes to the substrate binding site. 2 residues coordinate Ni(2+): His-247 and His-273. Catalysis depends on His-321, which acts as the Proton donor. Residue Asp-361 participates in Ni(2+) binding.

Belongs to the metallo-dependent hydrolases superfamily. Urease alpha subunit family. As to quaternary structure, heterotrimer of UreA (gamma), UreB (beta) and UreC (alpha) subunits. Three heterotrimers associate to form the active enzyme. Ni cation serves as cofactor. Carboxylation allows a single lysine to coordinate two nickel ions.

Its subcellular location is the cytoplasm. It carries out the reaction urea + 2 H2O + H(+) = hydrogencarbonate + 2 NH4(+). Its pathway is nitrogen metabolism; urea degradation; CO(2) and NH(3) from urea (urease route): step 1/1. The chain is Urease subunit alpha from Agrobacterium fabrum (strain C58 / ATCC 33970) (Agrobacterium tumefaciens (strain C58)).